The chain runs to 633 residues: Chaperone protein dnaK2 (633 aa).

Threonine 197 is subject to Phosphothreonine; by autocatalysis. The span at 513 to 532 (AEQNASSDKERREKIERKNQ) shows a compositional bias: basic and acidic residues. Disordered stretches follow at residues 513 to 534 (AEQN…NQAD) and 598 to 633 (QQAG…TETK). The segment covering 606-619 (PGAAPQDGGTTSSD) has biased composition (low complexity). Acidic residues predominate over residues 620–633 (GGDDVIDADFTETK).

This sequence belongs to the heat shock protein 70 family.

Its function is as follows. Acts as a chaperone. This chain is Chaperone protein dnaK2 (dnaK2), found in Nostoc sp. (strain PCC 7120 / SAG 25.82 / UTEX 2576).